The sequence spans 319 residues: tRNA uridine(34) hydroxylase (319 aa).

The 95-residue stretch at 124–218 folds into the Rhodanese domain; the sequence is LDEDTVILDA…YGKNEETKGE (95 aa). C178 serves as the catalytic Cysteine persulfide intermediate.

Belongs to the TrhO family.

The enzyme catalyses uridine(34) in tRNA + AH2 + O2 = 5-hydroxyuridine(34) in tRNA + A + H2O. Its function is as follows. Catalyzes oxygen-dependent 5-hydroxyuridine (ho5U) modification at position 34 in tRNAs. This is tRNA uridine(34) hydroxylase from Listeria welshimeri serovar 6b (strain ATCC 35897 / DSM 20650 / CCUG 15529 / CIP 8149 / NCTC 11857 / SLCC 5334 / V8).